Here is a 188-residue protein sequence, read N- to C-terminus: GTP cyclohydrolase 1 (188 aa).

Zn(2+) contacts are provided by C76, H79, and C148.

Belongs to the GTP cyclohydrolase I family. As to quaternary structure, toroid-shaped homodecamer, composed of two pentamers of five dimers.

It catalyses the reaction GTP + H2O = 7,8-dihydroneopterin 3'-triphosphate + formate + H(+). It functions in the pathway cofactor biosynthesis; 7,8-dihydroneopterin triphosphate biosynthesis; 7,8-dihydroneopterin triphosphate from GTP: step 1/1. The chain is GTP cyclohydrolase 1 from Caldanaerobacter subterraneus subsp. tengcongensis (strain DSM 15242 / JCM 11007 / NBRC 100824 / MB4) (Thermoanaerobacter tengcongensis).